The following is a 318-amino-acid chain: D-alanine--D-alanine ligase B (318 aa).

The 196-residue stretch at 116 to 311 (KQVWQSLGIP…FQQLVLAILA (196 aa)) folds into the ATP-grasp domain. Residue 142–197 (STELGFPLIVKPAHEGSSIGMAKVNSTQELVAAWQDAAKYDSQVLVEQWIHGPEFT) coordinates ATP. Mg(2+) contacts are provided by Asp-265, Glu-278, and Asn-280.

The protein belongs to the D-alanine--D-alanine ligase family. Mg(2+) serves as cofactor. Requires Mn(2+) as cofactor.

The protein resides in the cytoplasm. It catalyses the reaction 2 D-alanine + ATP = D-alanyl-D-alanine + ADP + phosphate + H(+). Its pathway is cell wall biogenesis; peptidoglycan biosynthesis. Functionally, cell wall formation. This Pseudomonas putida (strain ATCC 47054 / DSM 6125 / CFBP 8728 / NCIMB 11950 / KT2440) protein is D-alanine--D-alanine ligase B.